Reading from the N-terminus, the 4599-residue chain is Low-density lipoprotein receptor-related protein 1B (4599 aa).

The signal sequence occupies residues 1–20 (MSEFLLALLTLSGLLPIARV). Topologically, residues 25–4444 (ADRDQQLCDP…KSDHISTRSI (4420 aa)) are extracellular. 2 LDL-receptor class A domains span residues 31 to 70 (LCDP…DTCP) and 76 to 114 (KCPL…VHCQ). Cystine bridges form between Cys-32–Cys-45, Cys-39–Cys-58, Cys-52–Cys-69, Cys-77–Cys-90, Cys-84–Cys-103, Cys-97–Cys-113, Cys-120–Cys-129, Cys-125–Cys-138, Cys-140–Cys-153, Cys-159–Cys-169, Cys-165–Cys-178, and Cys-180–Cys-193. An EGF-like 1 domain is found at 116–154 (LLSNCQQLNCQYKCTMVRNSTRCYCEDGFEITEDGRSCK). Asn-134 is a glycosylation site (N-linked (GlcNAc...) asparagine). Residues 155–194 (DQDECAVYGTCSQTCRNTHGSYTCSCVEGYLMQPDNRSCK) enclose the EGF-like 2; calcium-binding domain. Asn-190, Asn-220, Asn-313, and Asn-360 each carry an N-linked (GlcNAc...) asparagine glycan. LDL-receptor class B repeat units lie at residues 295–337 (RNLY…DPIA), 338–381 (GKLF…DLVN), and 382–425 (KLVY…FEDY). Asn-443 carries N-linked (GlcNAc...) asparagine glycosylation. An EGF-like 3 domain is found at 471–517 (RSHACEVDPYGMPGGCSHICLLSSSYKTRTCRCRTGFNLGSDGRSCK). 4 LDL-receptor class B repeats span residues 568-610 (NYIY…DWIG), 611-656 (NNLY…DPVN), 657-706 (GWMY…DFHT), and 707-750 (NTLY…HGNY). N-linked (GlcNAc...) asparagine glycosylation is found at Asn-725 and Asn-758. One can recognise an EGF-like 4 domain in the interval 794-834 (GDNMCRVNNGGCSTLCLAIPGGRVCACADNQLLDENGTTCT). Intrachain disulfides connect Cys-798-Cys-809, Cys-805-Cys-818, Cys-820-Cys-833, Cys-845-Cys-857, Cys-852-Cys-870, and Cys-864-Cys-881. N-linked (GlcNAc...) asparagine glycosylation occurs at Asn-829. In terms of domain architecture, LDL-receptor class A 3 spans 844–882 (ICKAGEFRCKNRHCIQARWKCDGDDDCLDGSDEDSVNCF). An N-linked (GlcNAc...) asparagine glycan is attached at Asn-883. 7 LDL-receptor class A domains span residues 885–923 (SCPD…QTCT), 926–963 (TCQV…ASCE), 966–1003 (TCEP…VGCV), 1005–1043 (SCFD…INCT), 1052–1089 (GCNG…KGCN), 1094–1132 (LCDH…DDCD), and 1135–1174 (LCGP…YLCD). 15 disulfide bridges follow: Cys-886-Cys-898, Cys-893-Cys-911, Cys-905-Cys-922, Cys-927-Cys-939, Cys-934-Cys-952, Cys-946-Cys-962, Cys-967-Cys-980, Cys-975-Cys-993, Cys-987-Cys-1002, Cys-1006-Cys-1018, Cys-1013-Cys-1031, Cys-1025-Cys-1042, Cys-1053-Cys-1066, Cys-1060-Cys-1079, and Cys-1073-Cys-1088. Asn-919 is a glycosylation site (N-linked (GlcNAc...) asparagine). Asn-1041 is a glycosylation site (N-linked (GlcNAc...) asparagine). The N-linked (GlcNAc...) asparagine glycan is linked to Asn-1089. 6 cysteine pairs are disulfide-bonded: Cys-1095–Cys-1109, Cys-1103–Cys-1122, Cys-1116–Cys-1131, Cys-1136–Cys-1150, Cys-1143–Cys-1163, and Cys-1157–Cys-1173. Asn-1145 carries an N-linked (GlcNAc...) asparagine glycan. EGF-like domains are found at residues 1174–1213 (DECS…KTCE) and 1214–1253 (IVDY…ESCT). Asn-1209 is a glycosylation site (N-linked (GlcNAc...) asparagine). An N-linked (GlcNAc...) asparagine glycan is attached at Asn-1298. 5 LDL-receptor class B repeats span residues 1300–1346 (SLLY…DWIA), 1347–1389 (GNIY…DPRY), 1390–1436 (GILF…DHFE), 1437–1480 (KRIV…LYGS), and 1481–1522 (EVYW…YHPS). Residues Asn-1502, Asn-1549, and Asn-1636 are each glycosylated (N-linked (GlcNAc...) asparagine). The EGF-like 7 domain maps to 1527 to 1570 (APNPCAANDGKGPCSHMCLINHNRSAACACPHLMKLSSDKKTCY). LDL-receptor class B repeat units follow at residues 1618–1660 (ERLY…DWVS), 1661–1704 (RNLY…HPVR), 1705–1744 (GKLY…DYVE), and 1745–1787 (NKLY…TIMD). 2 N-linked (GlcNAc...) asparagine glycosylation sites follow: Asn-1754 and Asn-1816. Residues 1834–1875 (GSNSCQLNNGGCSQLCLPTSETTRTCMCTVGYYLQKNRMSCQ) form the EGF-like 8 domain. Disulfide bonds link Cys-1838–Cys-1849, Cys-1845–Cys-1859, and Cys-1861–Cys-1874. Asn-1921 carries an N-linked (GlcNAc...) asparagine glycan. LDL-receptor class B repeat units lie at residues 1922-1964 (DTIY…DWIA), 1965-2007 (GNIY…HPEK), 2008-2051 (GLLF…DYEE), and 2052-2095 (NKLY…FGAY). N-linked (GlcNAc...) asparagine glycosylation occurs at Asn-1983. N-linked (GlcNAc...) asparagine glycosylation is present at Asn-2105. The 41-residue stretch at 2143 to 2183 (GTNVCARDNGGCKQLCLYRGNSRRTCACAHGYLAEDGVTCL) folds into the EGF-like 9 domain. Disulfide bonds link Cys-2147–Cys-2158, Cys-2154–Cys-2168, and Cys-2170–Cys-2182. 5 LDL-receptor class B repeats span residues 2239-2280 (NRIF…HRAW), 2281-2329 (DTLY…DECQ), 2330-2374 (NLMF…DYRA), 2375-2416 (EKLY…VYDN), and 2417-2459 (YIFW…VAND). N-linked (GlcNAc...) asparagine glycosylation is found at Asn-2458, Asn-2488, and Asn-2507. The region spanning 2464–2504 (ELSPCALLNGGCHDLCLLTPNGRVNCSCRGDRILLEDNRCV) is the EGF-like 10 domain. An LDL-receptor class A 11 domain is found at 2509–2548 (SCNAYSEFECGNGECIDYQLTCDGIPHCKDKSDEKLLYCE). Disulfide bonds link Cys-2510/Cys-2523, Cys-2518/Cys-2536, and Cys-2530/Cys-2547. Asn-2549 carries N-linked (GlcNAc...) asparagine glycosylation. 6 consecutive LDL-receptor class A domains span residues 2551-2587 (SCRR…LDCK), 2590-2626 (TCAT…KNCN), 2629-2675 (DCTH…LKCP), 2681-2717 (KCEE…FHCD), 2719-2757 (SCSW…SICG), and 2760-2800 (TCAA…AGCA). Disulfide bonds link Cys-2552/Cys-2564, Cys-2559/Cys-2577, Cys-2571/Cys-2586, Cys-2591/Cys-2603, Cys-2598/Cys-2616, and Cys-2610/Cys-2625. Asn-2626 and Asn-2647 each carry an N-linked (GlcNAc...) asparagine glycan. Intrachain disulfides connect Cys-2630–Cys-2652, Cys-2646–Cys-2665, Cys-2659–Cys-2674, Cys-2682–Cys-2694, Cys-2689–Cys-2707, Cys-2701–Cys-2716, Cys-2720–Cys-2732, Cys-2727–Cys-2745, Cys-2739–Cys-2756, Cys-2761–Cys-2774, Cys-2768–Cys-2787, and Cys-2781–Cys-2799. N-linked (GlcNAc...) asparagine glycosylation is present at Asn-2802. LDL-receptor class A domains lie at 2804-2841 (TCDE…PQCG), 2844-2885 (QCGT…PKCK), and 2890-2926 (SCNS…RNCH). 15 disulfide bridges follow: Cys-2805–Cys-2817, Cys-2812–Cys-2830, Cys-2824–Cys-2840, Cys-2845–Cys-2857, Cys-2852–Cys-2871, Cys-2865–Cys-2884, Cys-2891–Cys-2903, Cys-2898–Cys-2916, Cys-2910–Cys-2925, Cys-2930–Cys-2942, Cys-2938–Cys-2951, Cys-2953–Cys-2966, Cys-2972–Cys-2982, Cys-2978–Cys-2991, and Cys-2993–Cys-3007. Asn-2892 is a glycosylation site (N-linked (GlcNAc...) asparagine). Residues 2927–2967 (INECLSKKVSGCSQDCQDLPVSYKCKCWPGFQLKDDGKTCV) enclose the EGF-like 11 domain. The 41-residue stretch at 2968–3008 (DIDECSSGFPCSQQCINTYGTYKCLCTDGYEIQPDNPNGCK) folds into the EGF-like 12; calcium-binding domain. N-linked (GlcNAc...) asparagine glycans are attached at residues Asn-3034, Asn-3066, and Asn-3076. LDL-receptor class B repeat units lie at residues 3055–3098 (EFIY…DWIG), 3099–3141 (KNLY…DPQA), 3142–3185 (GYLY…DYVN), 3186–3224 (RRLY…TLFE), and 3225–3268 (DYIY…HSYR). A glycan (N-linked (GlcNAc...) asparagine) is linked at Asn-3164. Residues 3273–3314 (SKHLCMINNGGCSHLCLLAPGKTHTCACPTNFYLAADNRTCL) form the EGF-like 13 domain. N-linked (GlcNAc...) asparagine glycans are attached at residues Asn-3310 and Asn-3316. 12 LDL-receptor class A domains span residues 3316 to 3353 (NCTA…DDCP), 3356 to 3392 (RCQP…LNCD), 3395 to 3432 (VCLS…RDCP), 3435 to 3472 (SCSP…ANCD), 3475 to 3511 (TCGP…ENCK), 3514 to 3550 (TCTL…RNCE), 3552 to 3588 (SCSK…KSCE), 3593 to 3629 (TCSS…MDCV), 3631 to 3668 (ECKE…ENCE), 3673 to 3711 (ICRA…DMCV), 3714 to 3752 (LCPS…DHCG), and 3761 to 3797 (PCKK…QGCR). Cystine bridges form between Cys-3317–Cys-3329, Cys-3324–Cys-3342, Cys-3336–Cys-3352, Cys-3357–Cys-3369, Cys-3364–Cys-3382, Cys-3376–Cys-3391, Cys-3396–Cys-3409, Cys-3403–Cys-3422, Cys-3416–Cys-3431, Cys-3436–Cys-3449, Cys-3443–Cys-3462, Cys-3456–Cys-3471, Cys-3476–Cys-3488, Cys-3483–Cys-3501, Cys-3495–Cys-3510, Cys-3515–Cys-3527, Cys-3522–Cys-3540, Cys-3534–Cys-3549, Cys-3553–Cys-3565, Cys-3560–Cys-3578, Cys-3572–Cys-3587, Cys-3594–Cys-3606, Cys-3601–Cys-3619, Cys-3613–Cys-3628, Cys-3632–Cys-3645, Cys-3639–Cys-3658, Cys-3652–Cys-3667, Cys-3674–Cys-3686, Cys-3681–Cys-3699, Cys-3693–Cys-3710, Cys-3715–Cys-3729, Cys-3723–Cys-3742, Cys-3736–Cys-3751, Cys-3762–Cys-3774, Cys-3769–Cys-3787, Cys-3781–Cys-3796, Cys-3805–Cys-3818, Cys-3812–Cys-3827, Cys-3829–Cys-3842, Cys-3848–Cys-3858, Cys-3854–Cys-3867, and Cys-3869–Cys-3880. Asn-3682 carries an N-linked (GlcNAc...) asparagine glycan. EGF-like domains are found at residues 3801–3843 (TEYT…RQCE) and 3844–3881 (DLNE…NTCI). N-linked (GlcNAc...) asparagine glycosylation is found at Asn-3877, Asn-3894, and Asn-3906. LDL-receptor class B repeat units lie at residues 3933–3980 (DMII…DWVA), 3981–4038 (GNIY…NPKR), 4039–4082 (GMMY…DYFS), and 4083–4127 (ERIY…FEDY). An N-linked (GlcNAc...) asparagine glycan is attached at Asn-4017. EGF-like domains lie at 4171–4208 (DLPN…GTCN), 4213–4249 (LDDS…ERCE), 4249–4285 (EVNH…PNCG), 4285–4321 (GKTV…DRCQ), 4321–4357 (QYYV…PKCE), 4357–4392 (EVDK…SSCQ), and 4390–4427 (SCQL…TQCE). An N-linked (GlcNAc...) asparagine glycan is attached at Asn-4204. Cystine bridges form between Cys-4217–Cys-4227, Cys-4221–Cys-4237, Cys-4253–Cys-4263, Cys-4257–Cys-4273, Cys-4275–Cys-4284, Cys-4289–Cys-4299, Cys-4293–Cys-4309, Cys-4311–Cys-4320, Cys-4325–Cys-4335, Cys-4329–Cys-4345, and Cys-4347–Cys-4356. Asn-4381 carries an N-linked (GlcNAc...) asparagine glycan. Disulfide bonds link Cys-4394/Cys-4404, Cys-4398/Cys-4415, and Cys-4417/Cys-4426. An N-linked (GlcNAc...) asparagine glycan is attached at Asn-4420. Residues 4445–4467 (AIIVPLVLLVTLITTLVIGLVLC) form a helical membrane-spanning segment. Residues 4468 to 4599 (KRKRRTKTIR…IEIGIRETVA (132 aa)) lie on the Cytoplasmic side of the membrane. 2 short sequence motifs (endocytosis signal) span residues 4492 to 4495 (NPSY) and 4559 to 4562 (NPVY).

This sequence belongs to the LDLR family. In terms of assembly, binds LRPAP1, PLAU, PLAT and SERPINE1; binding is followed by internalization and degradation of the ligands. As to expression, expressed in thyroid gland and in salivary gland, as well as in adult and fetal brain.

Its subcellular location is the membrane. Functionally, potential cell surface proteins that bind and internalize ligands in the process of receptor-mediated endocytosis. The chain is Low-density lipoprotein receptor-related protein 1B (LRP1B) from Homo sapiens (Human).